The primary structure comprises 390 residues: Cytochrome b (390 aa).

4 consecutive transmembrane segments (helical) span residues 32 to 52 (MGSLLGLCLVIQILTGIFMAM), 76 to 98 (WFLRYAHANGASFFFICMYIHMG), 113 to 133 (LWTIGVIIFILTMATAFLGYC), and 179 to 199 (FFALHYLFPFVIAAVVIMHMM). The heme b site is built by histidine 82 and histidine 96. Heme b is bound by residues histidine 183 and histidine 197. Position 202 (histidine 202) interacts with a ubiquinone. The next 4 helical transmembrane spans lie at 225–245 (FVFKDLITVFVFLIVFSLFVF), 289–309 (LMGVITMFSAILVLLVLPFTD), 321–341 (LSKLFFFLFVFNFVLLGQIGA), and 348–368 (YILMGQISTFLYFAYFLVFIP).

This sequence belongs to the cytochrome b family. As to quaternary structure, fungal cytochrome b-c1 complex contains 10 subunits; 3 respiratory subunits, 2 core proteins and 5 low-molecular weight proteins. Cytochrome b-c1 complex is a homodimer. Heme b is required as a cofactor.

It localises to the mitochondrion inner membrane. In terms of biological role, component of the ubiquinol-cytochrome c reductase complex (complex III or cytochrome b-c1 complex) that is part of the mitochondrial respiratory chain. The b-c1 complex mediates electron transfer from ubiquinol to cytochrome c. Contributes to the generation of a proton gradient across the mitochondrial membrane that is then used for ATP synthesis. This chain is Cytochrome b (COB), found in Naumovozyma castellii (Yeast).